A 473-amino-acid chain; its full sequence is Aspartyl/glutamyl-tRNA(Asn/Gln) amidotransferase subunit B (473 aa).

It belongs to the GatB/GatE family. GatB subfamily. Heterotrimer of A, B and C subunits.

The catalysed reaction is L-glutamyl-tRNA(Gln) + L-glutamine + ATP + H2O = L-glutaminyl-tRNA(Gln) + L-glutamate + ADP + phosphate + H(+). It catalyses the reaction L-aspartyl-tRNA(Asn) + L-glutamine + ATP + H2O = L-asparaginyl-tRNA(Asn) + L-glutamate + ADP + phosphate + 2 H(+). Its function is as follows. Allows the formation of correctly charged Asn-tRNA(Asn) or Gln-tRNA(Gln) through the transamidation of misacylated Asp-tRNA(Asn) or Glu-tRNA(Gln) in organisms which lack either or both of asparaginyl-tRNA or glutaminyl-tRNA synthetases. The reaction takes place in the presence of glutamine and ATP through an activated phospho-Asp-tRNA(Asn) or phospho-Glu-tRNA(Gln). This is Aspartyl/glutamyl-tRNA(Asn/Gln) amidotransferase subunit B from Wolbachia pipientis subsp. Culex pipiens (strain wPip).